We begin with the raw amino-acid sequence, 262 residues long: 3-methyl-2-oxobutanoate hydroxymethyltransferase (262 aa).

Mg(2+) contacts are provided by D42 and D81. 3-methyl-2-oxobutanoate is bound by residues 42 to 43, D81, and K110; that span reads DS. E112 contributes to the Mg(2+) binding site. E180 serves as the catalytic Proton acceptor.

It belongs to the PanB family. Homodecamer; pentamer of dimers. It depends on Mg(2+) as a cofactor.

It is found in the cytoplasm. The enzyme catalyses 3-methyl-2-oxobutanoate + (6R)-5,10-methylene-5,6,7,8-tetrahydrofolate + H2O = 2-dehydropantoate + (6S)-5,6,7,8-tetrahydrofolate. Its pathway is cofactor biosynthesis; (R)-pantothenate biosynthesis; (R)-pantoate from 3-methyl-2-oxobutanoate: step 1/2. Functionally, catalyzes the reversible reaction in which hydroxymethyl group from 5,10-methylenetetrahydrofolate is transferred onto alpha-ketoisovalerate to form ketopantoate. The polypeptide is 3-methyl-2-oxobutanoate hydroxymethyltransferase (Legionella pneumophila subsp. pneumophila (strain Philadelphia 1 / ATCC 33152 / DSM 7513)).